The primary structure comprises 406 residues: RILP-like protein 1 (406 aa).

Serine 7 is subject to Phosphoserine. The RH1 domain occupies 10–97 (AALSALEKNV…RVERMDRIEK (88 aa)). At cysteine 47 the chain carries S-nitrosocysteine. Residues 76-258 (ELDELRLELD…KLRERLQGEH (183 aa)) adopt a coiled-coil conformation. Disordered regions lie at residues 255 to 280 (QGEH…ESIS) and 330 to 354 (EIEE…QPES). Phosphoserine is present on serine 259. Residues 262 to 280 (GEEEEAEIPPQPDGEESIS) show a composition bias toward acidic residues. One can recognise an RH2 domain in the interval 294-359 (RPRFTLQELR…PQPESGIKRL (66 aa)).

This sequence belongs to the RILPL family. In terms of assembly, interacts (when S-nitrosylated) with GAPDH. Interacts with RAB8A; interaction is dependent on the phosphorylation of 'Thr-72' of RAB8A. Interacts with RAB10 and RAB12; the interaction is dependent on the phosphorylation of 'Thr-73' of RAB10, and 'Ser-105' of RAB12. Post-translationally, S-nitrosylation is required for the interaction with GAPDH. In terms of tissue distribution, highly expressed in heart, skeletal muscle, brain and lung (at protein level).

Its subcellular location is the cytoplasm. It is found in the cytosol. It localises to the cytoskeleton. The protein resides in the microtubule organizing center. The protein localises to the centrosome. Its subcellular location is the centriole. It is found in the cilium basal body. Functionally, plays a role in the regulation of cell shape and polarity. Plays a role in cellular protein transport, including protein transport away from primary cilia. Neuroprotective protein, which acts by sequestring GAPDH in the cytosol and prevent the apoptotic function of GAPDH in the nucleus. Competes with SIAH1 for binding GAPDH. Does not regulate lysosomal morphology and distribution. Binds to RAB10 following LRRK2-mediated RAB10 phosphorylation which leads to inhibition of ciliogenesis. This chain is RILP-like protein 1 (Rilpl1), found in Rattus norvegicus (Rat).